Reading from the N-terminus, the 970-residue chain is Glycine dehydrogenase (decarboxylating) (970 aa).

Position 723 is an N6-(pyridoxal phosphate)lysine (lysine 723).

It belongs to the GcvP family. As to quaternary structure, the glycine cleavage system is composed of four proteins: P, T, L and H. It depends on pyridoxal 5'-phosphate as a cofactor.

The enzyme catalyses N(6)-[(R)-lipoyl]-L-lysyl-[glycine-cleavage complex H protein] + glycine + H(+) = N(6)-[(R)-S(8)-aminomethyldihydrolipoyl]-L-lysyl-[glycine-cleavage complex H protein] + CO2. In terms of biological role, the glycine cleavage system catalyzes the degradation of glycine. The P protein binds the alpha-amino group of glycine through its pyridoxal phosphate cofactor; CO(2) is released and the remaining methylamine moiety is then transferred to the lipoamide cofactor of the H protein. This chain is Glycine dehydrogenase (decarboxylating), found in Burkholderia pseudomallei (strain 1106a).